The sequence spans 312 residues: uncharacterized protein (312 aa).

It belongs to the asfivirus CP312R family.

The protein resides in the virion. This is an uncharacterized protein from African swine fever virus (isolate Warthog/Namibia/Wart80/1980) (ASFV).